Consider the following 231-residue polypeptide: MKIGIIGAMEQEVAILKEQINGLATTIKAGCTFHTGTLNGAEVVLLQSGIGKVAAAVGTTLLISDHNVDVVLNTGSAGGFDSSLNLGDVVISTEVRHHDADVTAFGYEMGQMAQQPAAFKADEKLMAVAEKALTQMEDKHAVRGLICTGDAFVCTPERQAFIRSHFPSVIAVEMEASAIAQTCHQFSVPFVVVRAISDVADKESPMSFEEFLPLAAESSSEMVMKMVTLLK.

Glu12 functions as the Proton acceptor in the catalytic mechanism. Residues Gly78, Val153, and 174–175 (ME) each bind substrate. Asp198 acts as the Proton donor in catalysis.

It belongs to the PNP/UDP phosphorylase family. MtnN subfamily.

The catalysed reaction is S-adenosyl-L-homocysteine + H2O = S-(5-deoxy-D-ribos-5-yl)-L-homocysteine + adenine. It carries out the reaction S-methyl-5'-thioadenosine + H2O = 5-(methylsulfanyl)-D-ribose + adenine. It catalyses the reaction 5'-deoxyadenosine + H2O = 5-deoxy-D-ribose + adenine. It participates in amino-acid biosynthesis; L-methionine biosynthesis via salvage pathway; S-methyl-5-thio-alpha-D-ribose 1-phosphate from S-methyl-5'-thioadenosine (hydrolase route): step 1/2. Its function is as follows. Catalyzes the irreversible cleavage of the glycosidic bond in both 5'-methylthioadenosine (MTA) and S-adenosylhomocysteine (SAH/AdoHcy) to adenine and the corresponding thioribose, 5'-methylthioribose and S-ribosylhomocysteine, respectively. Also cleaves 5'-deoxyadenosine, a toxic by-product of radical S-adenosylmethionine (SAM) enzymes, into 5-deoxyribose and adenine. The protein is 5'-methylthioadenosine/S-adenosylhomocysteine nucleosidase of Aliivibrio salmonicida (strain LFI1238) (Vibrio salmonicida (strain LFI1238)).